A 397-amino-acid chain; its full sequence is Bifunctional arginine demethylase and lysyl-hydroxylase psr-1 (397 aa).

The region spanning 146–310 (RKTKKLSEDY…LVWPKTVRGR (165 aa)) is the JmjC domain. Threonine 189 provides a ligand contact to substrate. Histidine 192 and aspartate 194 together coordinate Fe cation. A 2-oxoglutarate-binding site is contributed by asparagine 202. Residue lysine 209 participates in substrate binding. Histidine 278 lines the Fe cation pocket. Residue threonine 290 coordinates 2-oxoglutarate. Polar residues predominate over residues 334–344 (SCTDTPPQSLN). The segment at 334–383 (SCTDTPPQSLNDSSSDSSSSSSSSDDSSDSETEEDSGRCGLGNRKRRNDV) is disordered. Residues 345–358 (DSSSDSSSSSSSSD) are compositionally biased toward low complexity.

The protein belongs to the JMJD6 family. As to quaternary structure, interacts with ced-5 and ced-12. Fe(2+) is required as a cofactor.

Its subcellular location is the nucleus. Functionally, dioxygenase that can both act as a histone arginine demethylase and a lysyl-hydroxylase. This is Bifunctional arginine demethylase and lysyl-hydroxylase psr-1 (psr-1) from Caenorhabditis briggsae.